The primary structure comprises 157 residues: Transcription elongation factor GreB (157 aa).

Residues 52-73 are a coiled coil; the sequence is KKLLREIDRRVRYLRKRLEDMR.

This sequence belongs to the GreA/GreB family. GreB subfamily.

Its function is as follows. Necessary for efficient RNA polymerase transcription elongation past template-encoded arresting sites. The arresting sites in DNA have the property of trapping a certain fraction of elongating RNA polymerases that pass through, resulting in locked ternary complexes. Cleavage of the nascent transcript by cleavage factors such as GreA or GreB allows the resumption of elongation from the new 3'terminus. GreB releases sequences of up to 9 nucleotides in length. The sequence is that of Transcription elongation factor GreB from Pseudomonas syringae pv. tomato (strain ATCC BAA-871 / DC3000).